We begin with the raw amino-acid sequence, 359 residues long: EGF-like domain containing protein 2 (359 aa).

The first 20 residues, 1–20 (MPPFISHFFLLSTFASLALC), serve as a signal peptide directing secretion. 2 consecutive EGF-like domains span residues 21–55 (SFYCKNPGYPCLNGGTCLYNGECNCTSGFRGFNCG) and 61–93 (ISAACTVECHNKGICYNGDKCYCTKDYMGPTCQ). Disulfide bonds link Cys-24-Cys-37, Cys-31-Cys-43, Cys-45-Cys-54, Cys-65-Cys-75, Cys-69-Cys-81, and Cys-83-Cys-92.

As to expression, prismatic layer of shell (at protein level). Expressed primarily in the mantle with highest level in the mantle edge and lower level in the mantle pallium.

It is found in the secreted. This is EGF-like domain containing protein 2 from Margaritifera margaritifera (Freshwater pearl mussel).